The following is a 273-amino-acid chain: Probable membrane transporter protein YunE (273 aa).

The next 8 membrane-spanning stretches (helical) occupy residues 3–23, 50–70, 81–101, 105–125, 157–177, 185–205, 222–242, and 251–271; these read FVIL…IGLG, AIGT…LAYI, LIFF…SKLF, SFSV…MLKA, VGIA…IGGG, MLLF…IIFL, WLYA…GAAI, and IVMI…YEGI.

The protein belongs to the 4-toluene sulfonate uptake permease (TSUP) (TC 2.A.102) family.

The protein resides in the cell membrane. The sequence is that of Probable membrane transporter protein YunE (yunE) from Bacillus subtilis (strain 168).